Here is a 364-residue protein sequence, read N- to C-terminus: Delta(7)-sterol 5(6)-desaturase (364 aa).

A run of 3 helical transmembrane segments spans residues 94–114 (FFSL…ITAS), 142–162 (LAVS…MLEL), and 181–201 (KLLI…YLAH). In terms of domain architecture, Fatty acid hydroxylase spans 188–312 (TFIFFTDCGI…FTTLWDRLGG (125 aa)). Positions 201-205 (HRWLH) match the Histidine box-1 motif. The Histidine box-2 signature appears at 214-218 (HKPHH). The chain crosses the membrane as a helical span at residues 249–269 (ILPLHKISYLILFTFVNFWSV). The short motif at 289–293 (HTVHH) is the Histidine box-3 element.

It belongs to the sterol desaturase family. Fe cation is required as a cofactor.

The protein localises to the endoplasmic reticulum membrane. It carries out the reaction a Delta(7)-sterol + 2 Fe(II)-[cytochrome b5] + O2 + 2 H(+) = a Delta(5),Delta(7)-sterol + 2 Fe(III)-[cytochrome b5] + 2 H2O. The protein operates within steroid metabolism; ergosterol biosynthesis; ergosterol from zymosterol: step 3/5. Functionally, catalyzes the introduction of a C-5 double bond in the B ring of ergosterol. May contribute to the regulation of ergosterol biosynthesis. The polypeptide is Delta(7)-sterol 5(6)-desaturase (ERG3) (Candida glabrata (strain ATCC 2001 / BCRC 20586 / JCM 3761 / NBRC 0622 / NRRL Y-65 / CBS 138) (Yeast)).